We begin with the raw amino-acid sequence, 687 residues long: MGNGERPPARRPDSSGSPPPAADAPAASNHPFSSHDTKHMTSRRLASRTAVAASLSALMLAACGGDDSANAPTAGGAAPLTPAVASPAGPTGSTPGSTPGATTAPAPSSTSAGQLSVDKMAFAQTHVVPSGGLSWTLPNASASLRPISRRDALVLVAIGQADAVQPVLEAWKDGAKLGALALSPPSALPPTESGGRAYANDRWSAVVPAAWMVPGVSFSVSASNYTSSVAQAPVFGTDADVQLTILPFYLFGADDTNSPPLSTTQAPDAATQQEIFAKWPTAELKVRTHPAGRFSLATVVVGPRADRTGAAQPAYPVTALDQQKDGYGVMSAMLTLITNMRTANGDGPLNDQYYAPLIALNSNGQFANLGGGLGGVGSGAAVGDHRYTGIFIHEQGHAFGLNHAGDEYAKGAYPYAGGSLSGSVWGYDPNHREFLDVLVPTTASSYAKCASSHQLDAQGRCYKQDPMQGGAGDQSSGYKFATFSDYNTGRMQAWIASRVLADPASSTGYSKWDSAAQARAPYTPTTDNNGLYGVNQNLPVQAGVPVHTIVVSFSKAGSAGASYIYPPFSYTGNLIATFDPTSAADRQAITVDKGTYPWYCKGTGCDYTLRVTYADGSQTYRVLQGGFRAWWTPTVDDANATNPLSGSSFRVWAINVPGDKRIGKIELLDTPMVWNGMPANPTVLLSR.

Disordered regions lie at residues methionine 1–leucine 45 and threonine 73–alanine 112. The Peptidase M66 domain maps to proline 233–alanine 501. A Zn(2+)-binding site is contributed by histidine 393. The active site involves glutamate 394. 2 residues coordinate Zn(2+): histidine 397 and histidine 403.

This sequence belongs to the dictomallein family. Zn(2+) serves as cofactor.

The sequence is that of Dictomallein (dtmL) from Burkholderia pseudomallei (strain 668).